A 617-amino-acid chain; its full sequence is Dihydroxy-acid dehydratase (617 aa).

Asp82 is a binding site for Mg(2+). Residue Cys123 coordinates [2Fe-2S] cluster. Mg(2+) contacts are provided by Asp124 and Lys125. Lys125 is modified (N6-carboxylysine). Cys197 serves as a coordination point for [2Fe-2S] cluster. Residue Glu497 coordinates Mg(2+). Ser523 acts as the Proton acceptor in catalysis.

The protein belongs to the IlvD/Edd family. Homodimer. It depends on [2Fe-2S] cluster as a cofactor. The cofactor is Mg(2+).

It catalyses the reaction (2R)-2,3-dihydroxy-3-methylbutanoate = 3-methyl-2-oxobutanoate + H2O. It carries out the reaction (2R,3R)-2,3-dihydroxy-3-methylpentanoate = (S)-3-methyl-2-oxopentanoate + H2O. It functions in the pathway amino-acid biosynthesis; L-isoleucine biosynthesis; L-isoleucine from 2-oxobutanoate: step 3/4. It participates in amino-acid biosynthesis; L-valine biosynthesis; L-valine from pyruvate: step 3/4. Functionally, functions in the biosynthesis of branched-chain amino acids. Catalyzes the dehydration of (2R,3R)-2,3-dihydroxy-3-methylpentanoate (2,3-dihydroxy-3-methylvalerate) into 2-oxo-3-methylpentanoate (2-oxo-3-methylvalerate) and of (2R)-2,3-dihydroxy-3-methylbutanoate (2,3-dihydroxyisovalerate) into 2-oxo-3-methylbutanoate (2-oxoisovalerate), the penultimate precursor to L-isoleucine and L-valine, respectively. The sequence is that of Dihydroxy-acid dehydratase from Streptomyces avermitilis (strain ATCC 31267 / DSM 46492 / JCM 5070 / NBRC 14893 / NCIMB 12804 / NRRL 8165 / MA-4680).